The chain runs to 281 residues: UPF0046 protein C25E10.12 (281 aa).

This sequence belongs to the UPF0046 family.

The polypeptide is UPF0046 protein C25E10.12 (Caenorhabditis elegans).